We begin with the raw amino-acid sequence, 139 residues long: Heavy metal-associated isoprenylated plant protein 13 (139 aa).

The HMA domain maps to 3 to 70 (PMKAVLQLSI…LCNTELVSVE (68 aa)). Positions 70–94 (EVVKPPEKKPEPEKPAPPKPAPAPA) are disordered. The span at 73 to 85 (KPPEKKPEPEKPA) shows a compositional bias: basic and acidic residues. C136 bears the Cysteine methyl ester mark. C136 carries the S-farnesyl cysteine lipid modification. Residues 137 to 139 (VIM) constitute a propeptide, removed in mature form.

The protein belongs to the HIPP family.

In terms of biological role, probable heavy-metal-binding protein. The polypeptide is Heavy metal-associated isoprenylated plant protein 13 (Arabidopsis thaliana (Mouse-ear cress)).